Here is a 23-residue protein sequence, read N- to C-terminus: Gastrin-releasing peptide (23 aa).

Methionine amide is present on methionine 23.

Belongs to the bombesin/neuromedin-B/ranatensin family.

It is found in the secreted. The protein resides in the cytoplasmic vesicle. Its subcellular location is the secretory vesicle lumen. Its function is as follows. Stimulates the release of gastrin and other gastrointestinal hormones. This is Gastrin-releasing peptide (grp) from Oncorhynchus mykiss (Rainbow trout).